A 211-amino-acid polypeptide reads, in one-letter code: Ribosomal RNA small subunit methyltransferase G (211 aa).

S-adenosyl-L-methionine contacts are provided by residues Gly74, Leu79, Ala125–Glu126, and Arg140.

The protein belongs to the methyltransferase superfamily. RNA methyltransferase RsmG family.

It localises to the cytoplasm. Its function is as follows. Specifically methylates the N7 position of guanine in position 518 of 16S rRNA. The chain is Ribosomal RNA small subunit methyltransferase G from Clavibacter michiganensis subsp. michiganensis (strain NCPPB 382).